Reading from the N-terminus, the 202-residue chain is Tumor necrosis factor alpha-induced protein 8-like protein 3 (202 aa).

Residues 1–10 show a composition bias toward acidic residues; the sequence is MDTDSGDLSE. The disordered stretch occupies residues 1–24; the sequence is MDTDSGDLSEGELSPGPEQFSSKS.

It belongs to the TNFAIP8 family.

Its subcellular location is the cytoplasm. The protein localises to the cell membrane. Its function is as follows. May act as a lipid transfer protein. The polypeptide is Tumor necrosis factor alpha-induced protein 8-like protein 3 (tnfaip8l3) (Xenopus laevis (African clawed frog)).